We begin with the raw amino-acid sequence, 146 residues long: Hemoglobin subunit beta (146 aa).

The residue at position 1 (Val-1) is an N-acetylvaline. Positions 2–146 (HLTDAEKNLV…VANALAHKYH (145 aa)) constitute a Globin domain. His-63 is a binding site for heme b. N6-acetyllysine is present on Lys-82. His-92 contacts heme b. At Cys-93 the chain carries S-nitrosocysteine. Lys-144 is modified (N6-acetyllysine).

It belongs to the globin family. As to quaternary structure, heterotetramer of two alpha chains and two beta chains. Red blood cells.

In terms of biological role, involved in oxygen transport from the lung to the various peripheral tissues. This Mesocricetus brandti (Brandt's hamster) protein is Hemoglobin subunit beta (HBB).